A 179-amino-acid chain; its full sequence is Large ribosomal subunit protein bL17 (179 aa).

The span at 123-161 shows a compositional bias: basic and acidic residues; it reads KEKDTKKKDDSKKSDDKKTSKKEAGFKSSKGESEHKKNT. A disordered region spans residues 123 to 179; sequence KEKDTKKKDDSKKSDDKKTSKKEAGFKSSKGESEHKKNTDQVVDSSSNRRYNRVKGS. Polar residues predominate over residues 162 to 171; sequence DQVVDSSSNR.

Belongs to the bacterial ribosomal protein bL17 family. Part of the 50S ribosomal subunit. Contacts protein L32.

The polypeptide is Large ribosomal subunit protein bL17 (Treponema denticola (strain ATCC 35405 / DSM 14222 / CIP 103919 / JCM 8153 / KCTC 15104)).